We begin with the raw amino-acid sequence, 72 residues long: Probable neurotoxin pcD-996 (72 aa).

An N-terminal signal peptide occupies residues 1–19 (MNYLVMISFALLLVIGVES). The 52-residue stretch at 21–72 (RDGYFVEPDNCLVYCMPSPEICDRGCKRYGATSGFCKEFSKGENFCWCKGLR) folds into the LCN-type CS-alpha/beta domain. Disulfide bonds link cysteine 35/cysteine 56, cysteine 42/cysteine 66, and cysteine 46/cysteine 68. Position 72 (arginine 72) is a propeptide, removed by a carboxypeptidase.

The protein belongs to the long (3 C-C) scorpion toxin superfamily. Expressed by the venom gland.

The protein resides in the secreted. This Androctonus australis (Sahara scorpion) protein is Probable neurotoxin pcD-996.